A 909-amino-acid chain; its full sequence is Myb-like protein Q (909 aa).

Disordered stretches follow at residues 15-65 (TTNN…QQQQ), 84-149 (QQQN…QQIL), and 216-280 (SAPS…KGPW). A compositionally biased stretch (low complexity) spans 17-46 (NNNSNNNNNNNNNNNNNNNNNNNNNINQNH). Basic residues predominate over residues 47-56 (QHQHQHHHHQ). A compositionally biased stretch (low complexity) spans 84 to 126 (QQQNYGESTTSTSMIPPSITTSLTPLTPTLSSQPQNIQQQQQQ). Residues 127–139 (QHHHQQQHHHHHQ) show a composition bias toward basic residues. The segment covering 216-226 (SAPSTPLSMSP) has biased composition (polar residues). HTH myb-type domains lie at 272–327 (SPGI…SPEV) and 328–378 (RKTN…LKKI). 2 DNA-binding regions (H-T-H motif) span residues 300–323 (WSSI…FNHL) and 351–374 (WTAI…NSTL). Positions 379–389 (GGDSKSLNKEK) are enriched in basic and acidic residues. Disordered stretches follow at residues 379–482 (GGDS…NTAI), 497–531 (QTTP…QTQQ), 616–642 (SMEQ…QQQQ), 672–748 (YQQQ…HPIE), and 826–855 (LNTT…IPTP). Residues 390-401 (DDDDDDDEDAED) show a composition bias toward acidic residues. Low complexity-rich tracts occupy residues 415–431 (SSSS…TNSS) and 444–482 (STTT…NTAI). Polar residues predominate over residues 497–508 (QTTPNSSPSLSS). Composition is skewed to low complexity over residues 622 to 642 (YQQQ…QQQQ), 672 to 726 (YQQQ…QQQQ), 733 to 744 (NSNNTDTTFSNS), and 826 to 851 (LNTT…NNNN).

Its subcellular location is the nucleus. This is Myb-like protein Q (mybQ) from Dictyostelium discoideum (Social amoeba).